Reading from the N-terminus, the 436-residue chain is GTPase Der (436 aa).

2 EngA-type G domains span residues 4 to 167 (PTVA…PVEE) and 175 to 351 (IRFS…ESQN). GTP-binding positions include 10–17 (GRPNVGKS), 57–61 (DTGGI), 119–122 (NKVD), 181–188 (GRPNVGKS), 229–233 (DTAGM), and 294–297 (NKWD). The region spanning 352–436 (KRIPSAVLND…PINLIARKRK (85 aa)) is the KH-like domain.

This sequence belongs to the TRAFAC class TrmE-Era-EngA-EngB-Septin-like GTPase superfamily. EngA (Der) GTPase family. As to quaternary structure, associates with the 50S ribosomal subunit.

Functionally, GTPase that plays an essential role in the late steps of ribosome biogenesis. The protein is GTPase Der of Streptococcus agalactiae serotype Ia (strain ATCC 27591 / A909 / CDC SS700).